The primary structure comprises 194 residues: Imidazoleglycerol-phosphate dehydratase (194 aa).

It belongs to the imidazoleglycerol-phosphate dehydratase family.

Its subcellular location is the cytoplasm. The catalysed reaction is D-erythro-1-(imidazol-4-yl)glycerol 3-phosphate = 3-(imidazol-4-yl)-2-oxopropyl phosphate + H2O. The protein operates within amino-acid biosynthesis; L-histidine biosynthesis; L-histidine from 5-phospho-alpha-D-ribose 1-diphosphate: step 6/9. This is Imidazoleglycerol-phosphate dehydratase from Listeria monocytogenes serotype 4b (strain F2365).